Here is a 346-residue protein sequence, read N- to C-terminus: Farnesyl diphosphate synthase 1 (346 aa).

The isopentenyl diphosphate site is built by lysine 52, arginine 55, and glutamine 90. Aspartate 97 and aspartate 101 together coordinate Mg(2+). Residues 97–101 (DDIMD) carry the DDXXD motif motif. Residue arginine 106 coordinates dimethylallyl diphosphate. Arginine 107 contributes to the isopentenyl diphosphate binding site. Positions 194, 195, and 233 each coordinate dimethylallyl diphosphate. The DDXXD motif signature appears at 236-240 (DDYLD). Dimethylallyl diphosphate is bound by residues lysine 250 and lysine 259.

This sequence belongs to the FPP/GGPP synthase family. Mg(2+) serves as cofactor. Requires Mn(2+) as cofactor. In terms of tissue distribution, highly expressed in shoots.

The enzyme catalyses isopentenyl diphosphate + (2E)-geranyl diphosphate = (2E,6E)-farnesyl diphosphate + diphosphate. It catalyses the reaction isopentenyl diphosphate + dimethylallyl diphosphate = (2E)-geranyl diphosphate + diphosphate. Its pathway is isoprenoid biosynthesis; farnesyl diphosphate biosynthesis; farnesyl diphosphate from geranyl diphosphate and isopentenyl diphosphate: step 1/1. The protein operates within isoprenoid biosynthesis; geranyl diphosphate biosynthesis; geranyl diphosphate from dimethylallyl diphosphate and isopentenyl diphosphate: step 1/1. In terms of biological role, catalyzes the sequential condensation of isopentenyl pyrophosphate (IPP) with the allylic pyrophosphates, dimethylallyl pyrophosphate (DMAPP), and then with the resultant geranylpyrophosphate (GPP) to the ultimate product farnesyl pyrophosphate (FPP). Has a 4.5 time greater affinity for GPP versus DMAPP. The sequence is that of Farnesyl diphosphate synthase 1 (FDS-1) from Artemisia spiciformis (Spiked big sagebrush).